A 314-amino-acid chain; its full sequence is Mycothiol acetyltransferase (314 aa).

N-acetyltransferase domains follow at residues 18 to 156 and 168 to 314; these read ATIR…RPLA and IRIA…MYQL. Position 38 (E38) interacts with 1D-myo-inositol 2-(L-cysteinylamino)-2-deoxy-alpha-D-glucopyranoside. Position 92–94 (92–94) interacts with acetyl-CoA; that stretch reads VVV. 1D-myo-inositol 2-(L-cysteinylamino)-2-deoxy-alpha-D-glucopyranoside contacts are provided by E195, K234, and E248. Acetyl-CoA is bound by residues 252–254 and 259–265; these read VGL and QGHGLGR. 1D-myo-inositol 2-(L-cysteinylamino)-2-deoxy-alpha-D-glucopyranoside is bound at residue Y286.

It belongs to the acetyltransferase family. MshD subfamily. Monomer.

It carries out the reaction 1D-myo-inositol 2-(L-cysteinylamino)-2-deoxy-alpha-D-glucopyranoside + acetyl-CoA = mycothiol + CoA + H(+). Functionally, catalyzes the transfer of acetyl from acetyl-CoA to desacetylmycothiol (Cys-GlcN-Ins) to form mycothiol. The chain is Mycothiol acetyltransferase from Catenulispora acidiphila (strain DSM 44928 / JCM 14897 / NBRC 102108 / NRRL B-24433 / ID139908).